Here is a 116-residue protein sequence, read N- to C-terminus: Immunoglobulin heavy variable 2-4 (116 aa).

Residues 1-19 (MAVLVLLFCLVTFPSCVLS) form the signal peptide. Positions 20-116 (QVQLKQSGPG…DDTAIYYCAK (97 aa)) constitute an Ig-like domain. Cys41 and Cys114 are disulfide-bonded.

This is Immunoglobulin heavy variable 2-4 from Mus musculus (Mouse).